The chain runs to 207 residues: High frequency lysogenization protein HflD homolog (207 aa).

Belongs to the HflD family.

The protein resides in the cytoplasm. It localises to the cell inner membrane. The sequence is that of High frequency lysogenization protein HflD homolog from Pseudomonas fluorescens (strain ATCC BAA-477 / NRRL B-23932 / Pf-5).